A 217-amino-acid chain; its full sequence is Frataxin, mitochondrial (217 aa).

A mitochondrion-targeting transit peptide spans 1–42 (MWTLGRRSVASFLPRSALPGFAPTRAGAPRPAKDLSLSGLPG).

The protein belongs to the frataxin family. In terms of assembly, component of the mitochondrial core iron-sulfur cluster (ISC) complex composed of NFS1, LYRM4, NDUFAB1, ISCU, FXN, and FDX2; this complex is a heterohexamer containing two copies of each monomer. Homodimer. Monomer (probable predominant form). Oligomer. Monomers and polymeric aggregates of &gt;1 MDa have been isolated from mitochondria. A small fraction of heterologous overexpressed recombinant frataxin forms high-molecular weight aggregates that incorporate iron. Interacts with LYRM4. Interacts (via ferrous form) with ISCU; the interaction is possible when both are bound to the dimeric form of the cysteine desulfurase complex (NFS1:LYRM4) and the interaction enhances FXN interaction to the dimeric form of the cysteine desulfurase complex (NFS1:LYRM4). Interacts with FECH; one iron-bound FXN monomer seems to interact with a FECH homodimer. Interacts with SDHA and SDHB. Interacts with ACO2; the interaction is dependent on citrate. Interacts with HSPA9. Interacts with ACO1. Interacts with ISCU (cytoplasmic form). Post-translationally, processed in two steps by mitochondrial processing peptidase (MPP). MPP first cleaves the precursor to intermediate form and subsequently converts the intermediate to yield frataxin mature form (frataxin(81-210)) which is the predominant form. The additional forms, frataxin(56-210) and frataxin(78-210), seem to be produced when the normal maturation process is impaired; their physiological relevance is unsure.

Its subcellular location is the mitochondrion. It is found in the cytoplasm. The protein localises to the cytosol. The catalysed reaction is 4 Fe(2+) + O2 + 4 H(+) = 4 Fe(3+) + 2 H2O. Functions as an activator of persulfide transfer to the scaffoding protein ISCU as component of the core iron-sulfur cluster (ISC) assembly complex and participates to the [2Fe-2S] cluster assembly. Accelerates sulfur transfer from NFS1 persulfide intermediate to ISCU and to small thiols such as L-cysteine and glutathione leading to persulfuration of these thiols and ultimately sulfide release. Binds ferrous ion and is released from FXN upon the addition of both L-cysteine and reduced FDX2 during [2Fe-2S] cluster assembly. The core iron-sulfur cluster (ISC) assembly complex is involved in the de novo synthesis of a [2Fe-2S] cluster, the first step of the mitochondrial iron-sulfur protein biogenesis. This process is initiated by the cysteine desulfurase complex (NFS1:LYRM4:NDUFAB1) that produces persulfide which is delivered on the scaffold protein ISCU in a FXN-dependent manner. Then this complex is stabilized by FDX2 which provides reducing equivalents to accomplish the [2Fe-2S] cluster assembly. Finally, the [2Fe-2S] cluster is transferred from ISCU to chaperone proteins, including HSCB, HSPA9 and GLRX5. May play a role in the protection against iron-catalyzed oxidative stress through its ability to catalyze the oxidation of Fe(2+) to Fe(3+); the oligomeric form but not the monomeric form has in vitro ferroxidase activity. May be able to store large amounts of iron in the form of a ferrihydrite mineral by oligomerization; however, the physiological relevance is unsure as reports are conflicting and the function has only been shown using heterologous overexpression systems. May function as an iron chaperone protein that protects the aconitase [4Fe-4S]2+ cluster from disassembly and promotes enzyme reactivation. May play a role as a high affinity iron binding partner for FECH that is capable of both delivering iron to ferrochelatase and mediating the terminal step in mitochondrial heme biosynthesis. Functionally, modulates the RNA-binding activity of ACO1. May be involved in the cytoplasmic iron-sulfur protein biogenesis. May contribute to oxidative stress resistance and overall cell survival. The sequence is that of Frataxin, mitochondrial from Bos taurus (Bovine).